We begin with the raw amino-acid sequence, 153 residues long: UPF0735 ACT domain-containing protein FN1487 (153 aa).

In terms of domain architecture, ACT spans 76–152 (SLHLSLKDRV…GIADIRITGS (77 aa)).

The protein belongs to the UPF0735 family.

The sequence is that of UPF0735 ACT domain-containing protein FN1487 from Fusobacterium nucleatum subsp. nucleatum (strain ATCC 25586 / DSM 15643 / BCRC 10681 / CIP 101130 / JCM 8532 / KCTC 2640 / LMG 13131 / VPI 4355).